The following is a 150-amino-acid chain: 16.6 kDa heat shock protein (150 aa).

Residues 31 to 150 (AERCPVLTNV…PQLKAIPISG (120 aa)) enclose the sHSP domain.

The protein belongs to the small heat shock protein (HSP20) family. In terms of assembly, may form oligomeric structures.

The protein localises to the cytoplasm. In Oryza sativa subsp. japonica (Rice), this protein is 16.6 kDa heat shock protein (HSP16.6).